Here is a 368-residue protein sequence, read N- to C-terminus: 1-aminocyclopropane-1-carboxylate oxidase (368 aa).

The Fe2OG dioxygenase domain maps to 177–307 (PFILMGLLHY…RFSIPFFLDP (131 aa)). Positions 191 to 226 (HQEQEEEQEDDESNNGGKKSPNPDESKKPEVEKFGT) are disordered. The span at 194 to 203 (QEEEQEDDES) shows a compositional bias: acidic residues. Basic and acidic residues predominate over residues 211–223 (PNPDESKKPEVEK). 3 residues coordinate Fe cation: His229, Asp231, and His287. Arg298 is a binding site for 2-oxoglutarate.

The protein belongs to the iron/ascorbate-dependent oxidoreductase family. The cofactor is Fe(2+).

It carries out the reaction 1-aminocyclopropane-1-carboxylate + L-ascorbate + O2 = ethene + L-dehydroascorbate + hydrogen cyanide + CO2 + 2 H2O. The protein operates within alkene biosynthesis; ethylene biosynthesis via S-adenosyl-L-methionine; ethylene from S-adenosyl-L-methionine: step 2/2. Functionally, involved in ethylene biosynthesis. Overexpression induces overproduction of ethylene. In Dictyostelium discoideum (Social amoeba), this protein is 1-aminocyclopropane-1-carboxylate oxidase (aco).